Reading from the N-terminus, the 449-residue chain is Probable magnetosome protein Mms48 (449 aa).

A signal peptide spans 1-18 (MLLRLIVLLIFMSPVVFA). A helical transmembrane segment spans residues 40-60 (SNMPVLLAVILVVFLIFSALS). One copy of the TPR repeat lies at 323–356 (PDGHLAAGEAAFAVQKWGVARRHIMAALKIAPDA).

It is found in the magnetosome membrane. Its function is as follows. Overexpression in wild-type cells increases the number of cells with double magnetosome chains significantly. The 4 genes of this operon collectively influence magnetosome size and number. The sequence is that of Probable magnetosome protein Mms48 from Magnetospirillum gryphiswaldense (strain DSM 6361 / JCM 21280 / NBRC 15271 / MSR-1).